We begin with the raw amino-acid sequence, 283 residues long: ATP phosphoribosyltransferase (283 aa).

The protein belongs to the ATP phosphoribosyltransferase family. Long subfamily. Mg(2+) is required as a cofactor.

The protein resides in the cytoplasm. The enzyme catalyses 1-(5-phospho-beta-D-ribosyl)-ATP + diphosphate = 5-phospho-alpha-D-ribose 1-diphosphate + ATP. The protein operates within amino-acid biosynthesis; L-histidine biosynthesis; L-histidine from 5-phospho-alpha-D-ribose 1-diphosphate: step 1/9. Feedback inhibited by histidine. Catalyzes the condensation of ATP and 5-phosphoribose 1-diphosphate to form N'-(5'-phosphoribosyl)-ATP (PR-ATP). Has a crucial role in the pathway because the rate of histidine biosynthesis seems to be controlled primarily by regulation of HisG enzymatic activity. The chain is ATP phosphoribosyltransferase from Bacteroides fragilis (strain ATCC 25285 / DSM 2151 / CCUG 4856 / JCM 11019 / LMG 10263 / NCTC 9343 / Onslow / VPI 2553 / EN-2).